The following is a 163-amino-acid chain: Transcriptional repressor NrdR (163 aa).

Residues 3–34 (CPKCNYLKSSVVDSRQAEEGNTIRRRRECENC) fold into a zinc finger. One can recognise an ATP-cone domain in the interval 49–139 (LLVVKKDGTR…VYRSFKDVDE (91 aa)).

This sequence belongs to the NrdR family. The cofactor is Zn(2+).

In terms of biological role, negatively regulates transcription of bacterial ribonucleotide reductase nrd genes and operons by binding to NrdR-boxes. The chain is Transcriptional repressor NrdR from Streptococcus mutans serotype c (strain ATCC 700610 / UA159).